The sequence spans 40 residues: Acyl-CoA-binding protein 2 (40 aa).

The span at 1-15 (ALKEEFEEHAEKAKT) shows a compositional bias: basic and acidic residues. The tract at residues 1–25 (ALKEEFEEHAEKAKTLPENTSSENK) is disordered. The ACB domain occupies 2 to 40 (LKEEFEEHAEKAKTLPENTSSENKLTLYGLYKQATVGNV).

Belongs to the ACBP family.

It localises to the cytoplasm. Functionally, binds medium- and long-chain acyl-CoA esters with very high affinity and may function as an intracellular carrier of acyl-CoA esters. This is Acyl-CoA-binding protein 2 from Digitalis lanata (Grecian foxglove).